Consider the following 242-residue polypeptide: B-box zinc finger protein 20 (242 aa).

Residues Cys-5, Cys-8, Cys-28, His-33, Cys-58, Cys-61, Cys-81, and His-91 each coordinate Zn(2+). The B box-type 1; atypical zinc finger occupies Cys-5–Leu-47. The segment at Cys-58–Leu-100 adopts a B box-type 2; atypical zinc-finger fold. Positions Tyr-112–Thr-153 are disordered. Over residues Ser-133–Thr-153 the composition is skewed to low complexity.

As to quaternary structure, interacts with MED25 and COP1. Post-translationally, COP1-mediated ubiquitination and subsequent proteasomal degradation of BBX20 occurs in the dark.

It localises to the nucleus. Functionally, acts as a positive regulator of seedling photomorphogenesis. Plays a negative role in brassinosteroid responses. The polypeptide is B-box zinc finger protein 20 (Arabidopsis thaliana (Mouse-ear cress)).